The sequence spans 569 residues: Dihydroxy-acid dehydratase (569 aa).

Mg(2+) is bound at residue aspartate 80. Cysteine 121 is a binding site for [2Fe-2S] cluster. Positions 122 and 123 each coordinate Mg(2+). At lysine 123 the chain carries N6-carboxylysine. Residue cysteine 194 participates in [2Fe-2S] cluster binding. Residue glutamate 446 coordinates Mg(2+). Serine 472 functions as the Proton acceptor in the catalytic mechanism.

Belongs to the IlvD/Edd family. As to quaternary structure, homodimer. [2Fe-2S] cluster serves as cofactor. It depends on Mg(2+) as a cofactor.

It carries out the reaction (2R)-2,3-dihydroxy-3-methylbutanoate = 3-methyl-2-oxobutanoate + H2O. The enzyme catalyses (2R,3R)-2,3-dihydroxy-3-methylpentanoate = (S)-3-methyl-2-oxopentanoate + H2O. The protein operates within amino-acid biosynthesis; L-isoleucine biosynthesis; L-isoleucine from 2-oxobutanoate: step 3/4. It functions in the pathway amino-acid biosynthesis; L-valine biosynthesis; L-valine from pyruvate: step 3/4. Functions in the biosynthesis of branched-chain amino acids. Catalyzes the dehydration of (2R,3R)-2,3-dihydroxy-3-methylpentanoate (2,3-dihydroxy-3-methylvalerate) into 2-oxo-3-methylpentanoate (2-oxo-3-methylvalerate) and of (2R)-2,3-dihydroxy-3-methylbutanoate (2,3-dihydroxyisovalerate) into 2-oxo-3-methylbutanoate (2-oxoisovalerate), the penultimate precursor to L-isoleucine and L-valine, respectively. This chain is Dihydroxy-acid dehydratase, found in Desulforudis audaxviator (strain MP104C).